Reading from the N-terminus, the 225-residue chain is DnaA regulatory inactivator Hda (225 aa).

This sequence belongs to the DnaA family. HdA subfamily. In terms of assembly, the active form seems to be an ADP-bound monomer. Forms the RIDA complex (regulatory inactivation of DnaA) of ATP-DnaA, ADP-Hda and the DNA-loaded beta sliding clamp (dnaN).

Functionally, mediates the interaction of DNA replication initiator protein DnaA with DNA polymerase subunit beta sliding clamp (dnaN). Stimulates hydrolysis of ATP-DnaA to ADP-DnaA, rendering DnaA inactive for reinitiation, a process called regulatory inhibition of DnaA or RIDA. The polypeptide is DnaA regulatory inactivator Hda (Klebsiella pneumoniae (strain 342)).